The primary structure comprises 118 residues: C-type natriuretic peptide 2 (118 aa).

The signal sequence occupies residues Met-1–Ala-22. The propeptide occupies Lys-23–Lys-96. A disulfide bond links Cys-102 and Cys-118.

This sequence belongs to the natriuretic peptide family.

Its subcellular location is the secreted. In terms of biological role, exhibits natriuretic and vasodepressor activity. Has a cGMP-stimulating activity. This chain is C-type natriuretic peptide 2, found in Aquarana catesbeiana (American bullfrog).